The chain runs to 205 residues: Dephospho-CoA kinase (205 aa).

In terms of domain architecture, DPCK spans 5-201 (VVGLTGGIGS…QRYLQLSGNH (197 aa)). Residue 13–18 (GSGKTT) participates in ATP binding.

The protein belongs to the CoaE family.

It localises to the cytoplasm. It carries out the reaction 3'-dephospho-CoA + ATP = ADP + CoA + H(+). Its pathway is cofactor biosynthesis; coenzyme A biosynthesis; CoA from (R)-pantothenate: step 5/5. Functionally, catalyzes the phosphorylation of the 3'-hydroxyl group of dephosphocoenzyme A to form coenzyme A. This is Dephospho-CoA kinase from Shewanella oneidensis (strain ATCC 700550 / JCM 31522 / CIP 106686 / LMG 19005 / NCIMB 14063 / MR-1).